We begin with the raw amino-acid sequence, 152 residues long: Large ribosomal subunit protein uL24 (152 aa).

The tract at residues V128–K152 is disordered.

Belongs to the universal ribosomal protein uL24 family. In terms of assembly, part of the 50S ribosomal subunit.

Functionally, one of two assembly initiator proteins, it binds directly to the 5'-end of the 23S rRNA, where it nucleates assembly of the 50S subunit. In terms of biological role, located at the polypeptide exit tunnel on the outside of the subunit. The protein is Large ribosomal subunit protein uL24 of Staphylothermus marinus (strain ATCC 43588 / DSM 3639 / JCM 9404 / F1).